Reading from the N-terminus, the 711-residue chain is DNA topoisomerase 3 (711 aa).

Residues Lys2–Thr135 enclose the Toprim domain. 2 residues coordinate Mg(2+): Glu8 and Asp104. The 429-residue stretch at Phe152 to Val580 folds into the Topo IA-type catalytic domain. An interaction with DNA region spans residues Ser186 to Gln191. The active-site O-(5'-phospho-DNA)-tyrosine intermediate is the Tyr305. The interval Lys672–Asn699 is disordered. Over residues Ser683–Asn692 the composition is skewed to basic and acidic residues.

The protein belongs to the type IA topoisomerase family. Mg(2+) is required as a cofactor.

It catalyses the reaction ATP-independent breakage of single-stranded DNA, followed by passage and rejoining.. In terms of biological role, releases the supercoiling and torsional tension of DNA, which is introduced during the DNA replication and transcription, by transiently cleaving and rejoining one strand of the DNA duplex. Introduces a single-strand break via transesterification at a target site in duplex DNA. The scissile phosphodiester is attacked by the catalytic tyrosine of the enzyme, resulting in the formation of a DNA-(5'-phosphotyrosyl)-enzyme intermediate and the expulsion of a 3'-OH DNA strand. The free DNA strand then undergoes passage around the unbroken strand, thus removing DNA supercoils. Finally, in the religation step, the DNA 3'-OH attacks the covalent intermediate to expel the active-site tyrosine and restore the DNA phosphodiester backbone. The polypeptide is DNA topoisomerase 3 (Staphylococcus haemolyticus (strain JCSC1435)).